The sequence spans 145 residues: Actin-depolymerizing factor 11 (145 aa).

The 135-residue stretch at 11 to 145 (SSGIGVAAEC…DIELLRERAH (135 aa)) folds into the ADF-H domain.

It belongs to the actin-binding proteins ADF family.

In terms of biological role, actin-depolymerizing protein. Severs actin filaments (F-actin) and binds to actin monomers. The polypeptide is Actin-depolymerizing factor 11 (ADF11) (Oryza sativa subsp. japonica (Rice)).